Reading from the N-terminus, the 287-residue chain is 4-hydroxybenzoate octaprenyltransferase (287 aa).

The next 9 membrane-spanning stretches (helical) occupy residues 19-39, 43-63, 94-114, 118-138, 142-162, 167-187, 209-229, 235-255, and 263-283; these read PIGTLLLLWPTLWALWLASSG, LQMLMIFIAGTFLMRSAGCAI, VVVAGVLALIAFLLIQPLNIF, LSVLALLVAFIYPFTKRFLAI, VLGIAFGFGIPMAYAAVLDFI, WVLFVGNIFWAIAYDTAYAMV, VLAIAFSYGVLFVSQLWVAHL, YFLIGWGAALGCAIYQLKLVS, and FLAFRHNNWLGGFLFLGIVLG.

It belongs to the UbiA prenyltransferase family. Requires Mg(2+) as cofactor.

The protein localises to the cell inner membrane. It carries out the reaction all-trans-octaprenyl diphosphate + 4-hydroxybenzoate = 4-hydroxy-3-(all-trans-octaprenyl)benzoate + diphosphate. It functions in the pathway cofactor biosynthesis; ubiquinone biosynthesis. Functionally, catalyzes the prenylation of para-hydroxybenzoate (PHB) with an all-trans polyprenyl group. Mediates the second step in the final reaction sequence of ubiquinone-8 (UQ-8) biosynthesis, which is the condensation of the polyisoprenoid side chain with PHB, generating the first membrane-bound Q intermediate 3-octaprenyl-4-hydroxybenzoate. The sequence is that of 4-hydroxybenzoate octaprenyltransferase from Polynucleobacter asymbioticus (strain DSM 18221 / CIP 109841 / QLW-P1DMWA-1) (Polynucleobacter necessarius subsp. asymbioticus).